The sequence spans 584 residues: Interferon regulatory factor 2-binding protein 1 (584 aa).

A disordered region spans residues 59-120 (HVLPEGRSPG…RYDRATSSSR (62 aa)). Serine 66 is subject to Phosphoserine. A compositionally biased stretch (low complexity) spans 82 to 100 (STGSQGSQLPPPQAQAQPS). At serine 125 the chain carries Phosphoserine. Position 177 is an omega-N-methylarginine (arginine 177). A Phosphoserine modification is found at serine 186. Residues 197–217 (EKEKQQRNADCLAELNEAMRG) are a coiled coil. A Glycyl lysine isopeptide (Lys-Gly) (interchain with G-Cter in SUMO2) cross-link involves residue lysine 227. Disordered regions lie at residues 346 to 421 (PAEA…GVPS) and 433 to 495 (LGHS…GTGA). The span at 354-369 (YPEPAPAALCGPPPRA) shows a compositional bias: pro residues. A phosphoserine mark is found at serine 371, serine 384, serine 421, and serine 436. Lysine 438 is covalently cross-linked (Glycyl lysine isopeptide (Lys-Gly) (interchain with G-Cter in SUMO2)). Residues 449–458 (AGGASPAASS) show a composition bias toward low complexity. A phosphoserine mark is found at serine 453 and serine 457. The segment at 503–550 (CTLCRERLEDTHFVQCPSVPGHKFCFPCSREFIKAQGPAGEVYCPSGD) adopts an RING-type; degenerate zinc-finger fold. Residues 503 to 550 (CTLCRERLEDTHFVQCPSVPGHKFCFPCSREFIKAQGPAGEVYCPSGD) form a cys-rich region.

Belongs to the IRF2BP family. As to quaternary structure, interacts with IRF2. Part of a corepressor complex containing IRF2 and IRF2BP2. Interacts with JDP2.

It localises to the nucleus. It catalyses the reaction S-ubiquitinyl-[E2 ubiquitin-conjugating enzyme]-L-cysteine + [acceptor protein]-L-lysine = [E2 ubiquitin-conjugating enzyme]-L-cysteine + N(6)-ubiquitinyl-[acceptor protein]-L-lysine.. Functionally, acts as a transcriptional corepressor in a IRF2-dependent manner; this repression is not mediated by histone deacetylase activities. May act as an E3 ligase towards JDP2, enhancing its polyubiquitination. Represses ATF2-dependent transcriptional activation. The sequence is that of Interferon regulatory factor 2-binding protein 1 (Irf2bp1) from Mus musculus (Mouse).